Consider the following 608-residue polypeptide: Protein FAM151A (608 aa).

A helical membrane pass occupies residues 14–34 (WILAGSVTVTLVLAISLILGL). A compositionally biased stretch (polar residues) spans 586 to 596 (VSSNRPSSRIG). Positions 586-608 (VSSNRPSSRIGPSSVEGFPGESR) are disordered.

This sequence belongs to the menorin family.

The protein resides in the membrane. The chain is Protein FAM151A (Fam151a) from Mus musculus (Mouse).